A 219-amino-acid polypeptide reads, in one-letter code: UPF0502 protein Ppro_2903 (219 aa).

It belongs to the UPF0502 family.

This chain is UPF0502 protein Ppro_2903, found in Pelobacter propionicus (strain DSM 2379 / NBRC 103807 / OttBd1).